We begin with the raw amino-acid sequence, 381 residues long: Chaperone protein DnaJ (381 aa).

Positions 4 to 69 constitute a J domain; the sequence is DYYEILGVAR…EKRARYDQFG (66 aa). Residues 139–221 form a CR-type zinc finger; it reads GGEKELRVTR…CGGSGLVRKT (83 aa). Zn(2+) is bound by residues Cys-152, Cys-155, Cys-169, Cys-172, Cys-195, Cys-198, Cys-209, and Cys-212. CXXCXGXG motif repeat units follow at residues 152 to 159, 169 to 176, 195 to 202, and 209 to 216; these read CGHCHGNG, CPTCQGRG, CSTCRGEG, and CRECGGSG.

Belongs to the DnaJ family. As to quaternary structure, homodimer. It depends on Zn(2+) as a cofactor.

It is found in the cytoplasm. In terms of biological role, participates actively in the response to hyperosmotic and heat shock by preventing the aggregation of stress-denatured proteins and by disaggregating proteins, also in an autonomous, DnaK-independent fashion. Unfolded proteins bind initially to DnaJ; upon interaction with the DnaJ-bound protein, DnaK hydrolyzes its bound ATP, resulting in the formation of a stable complex. GrpE releases ADP from DnaK; ATP binding to DnaK triggers the release of the substrate protein, thus completing the reaction cycle. Several rounds of ATP-dependent interactions between DnaJ, DnaK and GrpE are required for fully efficient folding. Also involved, together with DnaK and GrpE, in the DNA replication of plasmids through activation of initiation proteins. This chain is Chaperone protein DnaJ, found in Carboxydothermus hydrogenoformans (strain ATCC BAA-161 / DSM 6008 / Z-2901).